The sequence spans 547 residues: Chaperonin GroEL 1 (547 aa).

Residues 30 to 33, Lys-51, 87 to 91, Gly-415, and Asp-496 each bind ATP; these read TLGP and DGTTT. The tract at residues 525–547 is disordered; that stretch reads KPEPKSPAGGPGMGGMGGMDGMM. Gly residues predominate over residues 533-547; that stretch reads GGPGMGGMGGMDGMM.

It belongs to the chaperonin (HSP60) family. Forms a cylinder of 14 subunits composed of two heptameric rings stacked back-to-back. Interacts with the co-chaperonin GroES.

It localises to the cytoplasm. The catalysed reaction is ATP + H2O + a folded polypeptide = ADP + phosphate + an unfolded polypeptide.. Together with its co-chaperonin GroES, plays an essential role in assisting protein folding. The GroEL-GroES system forms a nano-cage that allows encapsulation of the non-native substrate proteins and provides a physical environment optimized to promote and accelerate protein folding. The chain is Chaperonin GroEL 1 from Cereibacter sphaeroides (strain ATCC 17023 / DSM 158 / JCM 6121 / CCUG 31486 / LMG 2827 / NBRC 12203 / NCIMB 8253 / ATH 2.4.1.) (Rhodobacter sphaeroides).